The sequence spans 488 residues: Ribulose bisphosphate carboxylase large chain 1 (488 aa).

The substrate site is built by asparagine 127 and threonine 177. Lysine 179 functions as the Proton acceptor in the catalytic mechanism. Substrate is bound at residue lysine 181. Mg(2+)-binding residues include lysine 205, aspartate 207, and glutamate 208. Position 205 is an N6-carboxylysine (lysine 205). Catalysis depends on histidine 297, which acts as the Proton acceptor. Positions 298, 330, and 382 each coordinate substrate.

It belongs to the RuBisCO large chain family. Type I subfamily. Heterohexadecamer of 8 large chains and 8 small chains. Mg(2+) serves as cofactor.

It catalyses the reaction 2 (2R)-3-phosphoglycerate + 2 H(+) = D-ribulose 1,5-bisphosphate + CO2 + H2O. The catalysed reaction is D-ribulose 1,5-bisphosphate + O2 = 2-phosphoglycolate + (2R)-3-phosphoglycerate + 2 H(+). In terms of biological role, ruBisCO catalyzes two reactions: the carboxylation of D-ribulose 1,5-bisphosphate, the primary event in carbon dioxide fixation, as well as the oxidative fragmentation of the pentose substrate. Both reactions occur simultaneously and in competition at the same active site. This chain is Ribulose bisphosphate carboxylase large chain 1, found in Bradyrhizobium sp. (strain BTAi1 / ATCC BAA-1182).